The primary structure comprises 309 residues: Protein FdhE (309 aa).

This sequence belongs to the FdhE family.

It is found in the cytoplasm. In terms of biological role, necessary for formate dehydrogenase activity. This is Protein FdhE from Salmonella choleraesuis (strain SC-B67).